A 190-amino-acid chain; its full sequence is Protein GrpE (190 aa).

A compositionally biased stretch (polar residues) spans 1–18 (MTETPNTSSEEIQTSEPS). Residues 1-21 (MTETPNTSSEEIQTSEPSPDN) are disordered.

This sequence belongs to the GrpE family. As to quaternary structure, homodimer.

Its subcellular location is the cytoplasm. Its function is as follows. Participates actively in the response to hyperosmotic and heat shock by preventing the aggregation of stress-denatured proteins, in association with DnaK and GrpE. It is the nucleotide exchange factor for DnaK and may function as a thermosensor. Unfolded proteins bind initially to DnaJ; upon interaction with the DnaJ-bound protein, DnaK hydrolyzes its bound ATP, resulting in the formation of a stable complex. GrpE releases ADP from DnaK; ATP binding to DnaK triggers the release of the substrate protein, thus completing the reaction cycle. Several rounds of ATP-dependent interactions between DnaJ, DnaK and GrpE are required for fully efficient folding. In Chlamydia trachomatis serovar L2 (strain ATCC VR-902B / DSM 19102 / 434/Bu), this protein is Protein GrpE.